A 366-amino-acid chain; its full sequence is NADP-dependent oxidoreductase domain-containing protein 1 (366 aa).

It belongs to the pyrroline-5-carboxylate reductase family.

In terms of biological role, probable oxidoreductase. This is NADP-dependent oxidoreductase domain-containing protein 1 (Noxred1) from Mus musculus (Mouse).